An 898-amino-acid chain; its full sequence is Chloride channel protein 2 (898 aa).

Residues 1–90 lie on the Cytoplasmic side of the membrane; the sequence is MAAPAAAAVE…RCHKFLVSRV (90 aa). Residues 19–37 are essential for channel gating by both voltage and cell volume; it reads QYEQTLMYGRYTQDLGAFA. The residue at position 23 (Thr23) is a Phosphothreonine. Residues 39–52 are modulates channel gating by both voltage and cell volume; the sequence is EEAARIRLGGPEPW. 2 helical membrane-spanning segments follow: residues 91–124 and 133–158; these read GEDW…AQQW and LLLQ…TQIL. The short motif at 164–168 is the Selectivity filter part_1 element; the sequence is GSGIP. Positions 167–174 form an intramembrane region, helical; sequence IPEMKTIL. The next 2 membrane-spanning stretches (helical) occupy residues 183-201 and 208-226; these read LTLK…ALGS and EGPF…SKFL. Positions 206 to 210 match the Selectivity filter part_2 motif; sequence GKEGP. 2 intramembrane regions (helical) span residues 242–254 and 258–266; these read MLAA…VGCC and PIGGVLFSI. 5 helical membrane-spanning segments follow: residues 278–298, 324–352, 361–380, 432–452, and 460–483; these read YWRG…LAVW, LPAF…VQVM, FLMR…ISTL, ANVF…SALA, and GAFM…MAAW. A Selectivity filter part_3 motif is present at residues 460 to 464; sequence GAFMP. The helical intramembrane region spans 500 to 514; that stretch reads GGYAVVGAAALAGAV. Residues 515-516 constitute an intramembrane region (note=Loop between two helices); that stretch reads TH. Positions 517–528 form an intramembrane region, helical; it reads TVSTAVIVFELT. The note=Loop between two helices intramembrane region spans 529–533; sequence GQIAH. Residues 534-551 traverse the membrane as a helical segment; sequence ILPVMIAVILANAVAQSL. Residues 552 to 898 lie on the Cytoplasmic side of the membrane; that stretch reads QPSLYDSIIR…SPSDSDDKCQ (347 aa). Positions 587–645 constitute a CBS 1 domain; that stretch reads MVRDVPHVALSCTFRDLRLALHRTKGRTLALVESPESMILLGSIERTQVVALLAAQLSP. Over residues 647–658 the composition is skewed to basic residues; that stretch reads RRRQSKQKRRVA. The segment at 647-675 is disordered; sequence RRRQSKQKRRVAHTSPPSCQESPPSPETS. Ser710 bears the Phosphoserine mark. A disordered region spans residues 726 to 766; it reads FCGSPPPEAASESEKSESSEKRKSKRVRISLASDSDLEGEM. Positions 737 to 746 are enriched in basic and acidic residues; sequence ESEKSESSEK. Ser758 bears the Phosphoserine mark. In terms of domain architecture, CBS 2 spans 790-850; that stretch reads IDPAPFQLVE…GSVTAQGVKV (61 aa). The Basolateral membrane sorting signature appears at 812–813; that stretch reads LL. The interval 856–898 is disordered; sequence SFRDSATSSSDTETTEVHALWGPRSRHGLPREGSPSDSDDKCQ.

The protein belongs to the chloride channel (TC 2.A.49) family. ClC-2/CLCN2 subfamily. In terms of assembly, homodimer. Interacts with auxiliary subunit HEPACAM. Phosphorylated. Activated by dephosphorylation. As to expression, ubiquitously expressed.

The protein resides in the cell membrane. It localises to the basolateral cell membrane. It is found in the cell projection. The protein localises to the dendritic spine membrane. Its subcellular location is the axon. It carries out the reaction chloride(in) = chloride(out). The enzyme catalyses thiocyanate(in) = thiocyanate(out). The catalysed reaction is bromide(in) = bromide(out). It catalyses the reaction nitrate(in) = nitrate(out). It carries out the reaction iodide(out) = iodide(in). Common gate kinetics are down-regulated by intracellular ATP. Inhibited by AK-42, a derivative of meclofenamate. Inhibited by Cd(2+). Inhibited by Zn(2+) and PKC activation. Inhibited at acidic pH. CCLN2:HEPACAM channel conductance is up-regulated upon hypo-osmolarity. In terms of biological role, voltage-gated and osmosensitive chloride channel. Forms a homodimeric channel where each subunit has its own ion conduction pathway. Conducts double-barreled currents controlled by two types of gates, two fast glutamate gates that control each subunit independently and a slow common gate that opens and shuts off both subunits simultaneously. Displays inward rectification currents activated upon membrane hyperpolarization and extracellular hypotonicity. Contributes to chloride conductance involved in neuron excitability. In hippocampal neurons, generates a significant part of resting membrane conductance and provides an additional chloride efflux pathway to prevent chloride accumulation in dendrites upon GABA receptor activation. In glia, associates with the auxiliary subunit HEPACAM/GlialCAM at astrocytic processes and myelinated fiber tracts where it may regulate transcellular chloride flux buffering extracellular chloride and potassium concentrations. Regulates aldosterone production in adrenal glands. The opening of CLCN2 channels at hyperpolarized membrane potentials in the glomerulosa causes cell membrane depolarization, activation of voltage-gated calcium channels and increased expression of aldosterone synthase, the rate-limiting enzyme for aldosterone biosynthesis. Contributes to chloride conductance in retinal pigment epithelium involved in phagocytosis of shed photoreceptor outer segments and photoreceptor renewal. Conducts chloride currents at the basolateral membrane of epithelial cells with a role in chloride reabsorption rather than secretion. Permeable to small monovalent anions with chloride &gt; thiocyanate &gt; bromide &gt; nitrate &gt; iodide ion selectivity. The protein is Chloride channel protein 2 (CLCN2) of Oryctolagus cuniculus (Rabbit).